The sequence spans 341 residues: UDP-3-O-acylglucosamine N-acyltransferase (341 aa).

His241 (proton acceptor) is an active-site residue.

This sequence belongs to the transferase hexapeptide repeat family. LpxD subfamily. Homotrimer.

It catalyses the reaction a UDP-3-O-[(3R)-3-hydroxyacyl]-alpha-D-glucosamine + a (3R)-hydroxyacyl-[ACP] = a UDP-2-N,3-O-bis[(3R)-3-hydroxyacyl]-alpha-D-glucosamine + holo-[ACP] + H(+). It functions in the pathway bacterial outer membrane biogenesis; LPS lipid A biosynthesis. Functionally, catalyzes the N-acylation of UDP-3-O-acylglucosamine using 3-hydroxyacyl-ACP as the acyl donor. Is involved in the biosynthesis of lipid A, a phosphorylated glycolipid that anchors the lipopolysaccharide to the outer membrane of the cell. This chain is UDP-3-O-acylglucosamine N-acyltransferase, found in Mannheimia succiniciproducens (strain KCTC 0769BP / MBEL55E).